A 413-amino-acid polypeptide reads, in one-letter code: Methylaspartate ammonia-lyase (413 aa).

Residue glutamine 172 coordinates (2S,3S)-3-methyl-L-aspartate. Mg(2+) contacts are provided by aspartate 238, glutamate 273, and aspartate 307. Glutamine 329 lines the (2S,3S)-3-methyl-L-aspartate pocket. The active-site Proton acceptor is the lysine 331. (2S,3S)-3-methyl-L-aspartate contacts are provided by residues 360–361 (TC) and cysteine 361.

Belongs to the methylaspartate ammonia-lyase family. In terms of assembly, homodimer. It depends on Mg(2+) as a cofactor.

The enzyme catalyses (2S,3S)-3-methyl-L-aspartate = mesaconate + NH4(+). The protein operates within amino-acid degradation; L-glutamate degradation via mesaconate pathway; acetate and pyruvate from L-glutamate: step 2/4. Inhibited by calcium ions. In terms of biological role, involved in the methylaspartate cycle. Catalyzes the formation of the alpha,beta-unsaturated bond by the reversible anti elimination of ammonia from L-threo-beta-methylaspartate (L-threo-(2S,3S)-3-methylaspartate) to give mesaconate. It can also use L-erythro-beta-methylaspartate (L-erythro-(2S,3R)-3-methylaspartate), L-aspartate, fumarate and ethylfumarate as substrates. The polypeptide is Methylaspartate ammonia-lyase (Clostridium tetanomorphum).